We begin with the raw amino-acid sequence, 188 residues long: Glutathione S-transferase 2 (188 aa).

Residues 2 to 79 enclose the GST N-terminal domain; the sequence is VHYKLMCFDV…FLARQYGYSG (78 aa). Glutathione-binding positions include Lys43, 49 to 51, and 63 to 64; these read GQL and QS. In terms of domain architecture, GST C-terminal spans 81–188; sequence TPTEEMQVDS…PHLNVFIRKL (108 aa).

The protein belongs to the GST superfamily. Sigma family.

It carries out the reaction RX + glutathione = an S-substituted glutathione + a halide anion + H(+). Its function is as follows. Conjugation of reduced glutathione to a wide number of exogenous and endogenous hydrophobic electrophiles. This chain is Glutathione S-transferase 2 (gst-2), found in Caenorhabditis elegans.